We begin with the raw amino-acid sequence, 365 residues long: UDP-N-acetylglucosamine--N-acetylmuramyl-(pentapeptide) pyrophosphoryl-undecaprenol N-acetylglucosamine transferase (365 aa).

UDP-N-acetyl-alpha-D-glucosamine-binding positions include threonine 19–glycine 21, asparagine 131, arginine 170, serine 201, isoleucine 255, alanine 274–glutamate 279, and glutamine 300.

Belongs to the glycosyltransferase 28 family. MurG subfamily.

The protein localises to the cell inner membrane. The enzyme catalyses di-trans,octa-cis-undecaprenyl diphospho-N-acetyl-alpha-D-muramoyl-L-alanyl-D-glutamyl-meso-2,6-diaminopimeloyl-D-alanyl-D-alanine + UDP-N-acetyl-alpha-D-glucosamine = di-trans,octa-cis-undecaprenyl diphospho-[N-acetyl-alpha-D-glucosaminyl-(1-&gt;4)]-N-acetyl-alpha-D-muramoyl-L-alanyl-D-glutamyl-meso-2,6-diaminopimeloyl-D-alanyl-D-alanine + UDP + H(+). The protein operates within cell wall biogenesis; peptidoglycan biosynthesis. In terms of biological role, cell wall formation. Catalyzes the transfer of a GlcNAc subunit on undecaprenyl-pyrophosphoryl-MurNAc-pentapeptide (lipid intermediate I) to form undecaprenyl-pyrophosphoryl-MurNAc-(pentapeptide)GlcNAc (lipid intermediate II). The polypeptide is UDP-N-acetylglucosamine--N-acetylmuramyl-(pentapeptide) pyrophosphoryl-undecaprenol N-acetylglucosamine transferase (Acinetobacter baylyi (strain ATCC 33305 / BD413 / ADP1)).